The primary structure comprises 568 residues: Sulfite reductase [NADPH] hemoprotein beta-component (568 aa).

[4Fe-4S] cluster is bound by residues Cys426, Cys432, Cys471, and Cys475. Siroheme is bound at residue Cys475.

It belongs to the nitrite and sulfite reductase 4Fe-4S domain family. As to quaternary structure, alpha(8)-beta(8). The alpha component is a flavoprotein, the beta component is a hemoprotein. It depends on siroheme as a cofactor. [4Fe-4S] cluster serves as cofactor.

The enzyme catalyses hydrogen sulfide + 3 NADP(+) + 3 H2O = sulfite + 3 NADPH + 4 H(+). The protein operates within sulfur metabolism; hydrogen sulfide biosynthesis; hydrogen sulfide from sulfite (NADPH route): step 1/1. Functionally, component of the sulfite reductase complex that catalyzes the 6-electron reduction of sulfite to sulfide. This is one of several activities required for the biosynthesis of L-cysteine from sulfate. The sequence is that of Sulfite reductase [NADPH] hemoprotein beta-component from Xylella fastidiosa (strain M12).